Consider the following 478-residue polypeptide: Protein adenylyltransferase VbhT (478 aa).

Positions 55-200 constitute a Fido domain; that stretch reads FDLDHMKKIH…RRNLTEFTVN (146 aa). Residues 85-88, 133-136, 140-147, and Ser-175 contribute to the ATP site; these read KDNS, NALH, and EGNGRTLR.

Homodimer. Interacts with VbhA.

The catalysed reaction is L-tyrosyl-[protein] + ATP = O-(5'-adenylyl)-L-tyrosyl-[protein] + diphosphate. It catalyses the reaction L-threonyl-[protein] + ATP = 3-O-(5'-adenylyl)-L-threonyl-[protein] + diphosphate. With respect to regulation, adenylyltransferase activity is inhibited by antitoxin VbhA; which acts by competing with ATP-binding at Arg-147 and prevents productive ATP-binding. Its function is as follows. Toxic component of type II toxin-antitoxin (TA) system VbhT-VbhA. Adenylyltransferase involved in virulence by mediating the addition of adenosine 5'-monophosphate (AMP) to specific residue of host GTPases. The resulting AMPylation affects GTPases, impairing actin assembly in infected cells. This Bartonella schoenbuchensis (strain DSM 13525 / NCTC 13165 / R1) protein is Protein adenylyltransferase VbhT (vbhT).